A 437-amino-acid chain; its full sequence is Ribulose bisphosphate carboxylase-like protein (437 aa).

The Proton acceptor role is filled by Lys-176. Mg(2+) contacts are provided by Lys-202, Asp-204, and Glu-205. Lys-202 carries the post-translational modification N6-carboxylysine. Catalysis depends on His-293, which acts as the Proton acceptor.

It belongs to the RuBisCO large chain family. Type IV subfamily. In terms of assembly, homodimer. It depends on Mg(2+) as a cofactor.

Functionally, may be involved in sulfur metabolism and oxidative stress response. Does not show RuBisCO activity. This is Ribulose bisphosphate carboxylase-like protein from Archaeoglobus fulgidus (strain ATCC 49558 / DSM 4304 / JCM 9628 / NBRC 100126 / VC-16).